The chain runs to 274 residues: 2,3,4,5-tetrahydropyridine-2,6-dicarboxylate N-succinyltransferase (274 aa).

The substrate site is built by Arg-106 and Asp-143.

Belongs to the transferase hexapeptide repeat family. As to quaternary structure, homotrimer.

It is found in the cytoplasm. The catalysed reaction is (S)-2,3,4,5-tetrahydrodipicolinate + succinyl-CoA + H2O = (S)-2-succinylamino-6-oxoheptanedioate + CoA. The protein operates within amino-acid biosynthesis; L-lysine biosynthesis via DAP pathway; LL-2,6-diaminopimelate from (S)-tetrahydrodipicolinate (succinylase route): step 1/3. This chain is 2,3,4,5-tetrahydropyridine-2,6-dicarboxylate N-succinyltransferase, found in Rickettsia felis (strain ATCC VR-1525 / URRWXCal2) (Rickettsia azadi).